Consider the following 447-residue polypeptide: Monocarboxylate transporter 11 (447 aa).

Over 1–11 (MTPKPAGPPDG) the chain is Cytoplasmic. The next 12 helical transmembrane spans lie at 12–32 (GWGW…YGLL), 54–74 (AWVS…GSAL), 80–100 (ARPV…FSAF), 107–127 (LYLG…APAL), 139–159 (VLAV…LAPA), 162–182 (FLLD…VTLH), 219–239 (AFSV…VPYV), 249–269 (GMGG…DACA), 288–308 (LVVF…VPTV), 330–350 (GSYA…GGVV), 354–374 (GLVM…SGFL), and 383–403 (ASFL…MGLP). Residues 404-447 (RALPSCRPASPPATPPPERGELLPVPQVSLLSAGGTGSIRDTTC) are Cytoplasmic-facing.

The protein belongs to the major facilitator superfamily. Monocarboxylate porter (TC 2.A.1.13) family. Interacts with isoform 2 of BSG.

The protein localises to the endoplasmic reticulum membrane. Its subcellular location is the cell membrane. The catalysed reaction is pyruvate(out) + H(+)(out) = pyruvate(in) + H(+)(in). Its function is as follows. Proton-linked monocarboxylate transporter. It catalyzes the transport of pyruvate across the plasma membrane. Probably involved in hepatic lipid metabolism: overexpression results in an increase of triacylglycerol(TAG) levels, small increases in intracellular diacylglycerols and decreases in lysophosphatidylcholine, cholesterol ester and sphingomyelin lipids. This Mus musculus (Mouse) protein is Monocarboxylate transporter 11 (Slc16a11).